A 349-amino-acid polypeptide reads, in one-letter code: NADH-quinone oxidoreductase subunit H (349 aa).

Helical transmembrane passes span 19–39 (VWTLTKIVAIIAPLMLCVAYL), 88–108 (GLFILGPILAIAPSLAAWAVV), 123–143 (LLFLLAITSVEVYGVIIAGWA), 161–181 (VSYEVAMGFALICVLLISASL), 202–222 (FLSWNWIPLFPMFIVFLISGI), 249–269 (GMAFALFFLAEYANMILVSIL), 284–304 (FLPDGFFWLALKTAFFLFVFL), and 325–345 (VFIPITLVWVIVVAVWMMSPL).

It belongs to the complex I subunit 1 family. In terms of assembly, NDH-1 is composed of 14 different subunits. Subunits NuoA, H, J, K, L, M, N constitute the membrane sector of the complex.

It localises to the cell inner membrane. It catalyses the reaction a quinone + NADH + 5 H(+)(in) = a quinol + NAD(+) + 4 H(+)(out). NDH-1 shuttles electrons from NADH, via FMN and iron-sulfur (Fe-S) centers, to quinones in the respiratory chain. The immediate electron acceptor for the enzyme in this species is believed to be ubiquinone. Couples the redox reaction to proton translocation (for every two electrons transferred, four hydrogen ions are translocated across the cytoplasmic membrane), and thus conserves the redox energy in a proton gradient. This subunit may bind ubiquinone. The chain is NADH-quinone oxidoreductase subunit H from Aromatoleum aromaticum (strain DSM 19018 / LMG 30748 / EbN1) (Azoarcus sp. (strain EbN1)).